A 283-amino-acid chain; its full sequence is Pantothenate synthetase (283 aa).

Position 30–37 (30–37) interacts with ATP; it reads MGNLHDGH. H37 serves as the catalytic Proton donor. Q61 serves as a coordination point for (R)-pantoate. Residue Q61 coordinates beta-alanine. 149–152 serves as a coordination point for ATP; sequence GEKD. Q155 contributes to the (R)-pantoate binding site. 186–189 serves as a coordination point for ATP; sequence LSSR.

This sequence belongs to the pantothenate synthetase family. Homodimer.

It localises to the cytoplasm. The enzyme catalyses (R)-pantoate + beta-alanine + ATP = (R)-pantothenate + AMP + diphosphate + H(+). The protein operates within cofactor biosynthesis; (R)-pantothenate biosynthesis; (R)-pantothenate from (R)-pantoate and beta-alanine: step 1/1. In terms of biological role, catalyzes the condensation of pantoate with beta-alanine in an ATP-dependent reaction via a pantoyl-adenylate intermediate. This chain is Pantothenate synthetase, found in Shigella sonnei (strain Ss046).